The following is a 692-amino-acid chain: Methionine--tRNA ligase (692 aa).

Positions 15–25 (PYANGPIHLGH) match the 'HIGH' region motif. Residues Cys146, Cys149, Cys159, and Cys162 each coordinate Zn(2+). The 'KMSKS' region motif lies at 332 to 336 (KMSKS). Lys335 is an ATP binding site. The interval 552–577 (TTEAAPEKKAKKSAETADVAVDTRSP) is disordered. Basic and acidic residues predominate over residues 556 to 566 (APEKKAKKSAE). The 102-residue stretch at 591 to 692 (DFAKLDLRIA…EGAQPGMRVK (102 aa)) folds into the tRNA-binding domain.

The protein belongs to the class-I aminoacyl-tRNA synthetase family. MetG type 1 subfamily. As to quaternary structure, homodimer. Zn(2+) is required as a cofactor.

The protein localises to the cytoplasm. The catalysed reaction is tRNA(Met) + L-methionine + ATP = L-methionyl-tRNA(Met) + AMP + diphosphate. Functionally, is required not only for elongation of protein synthesis but also for the initiation of all mRNA translation through initiator tRNA(fMet) aminoacylation. The polypeptide is Methionine--tRNA ligase (Shewanella sediminis (strain HAW-EB3)).